The chain runs to 219 residues: Cytidylate kinase (219 aa).

15–23 (GPAASGKGT) contributes to the ATP binding site.

It belongs to the cytidylate kinase family. Type 1 subfamily.

Its subcellular location is the cytoplasm. The enzyme catalyses CMP + ATP = CDP + ADP. It carries out the reaction dCMP + ATP = dCDP + ADP. In Brucella suis biovar 1 (strain 1330), this protein is Cytidylate kinase.